Consider the following 206-residue polypeptide: Large ribosomal subunit protein bL9 (206 aa).

The segment at 182–206 (FAENQQKALAKEMNDNDANSINEEA) is disordered. Over residues 197–206 (NDANSINEEA) the composition is skewed to polar residues.

Belongs to the bacterial ribosomal protein bL9 family.

In terms of biological role, binds to the 23S rRNA. The polypeptide is Large ribosomal subunit protein bL9 (Bartonella henselae (strain ATCC 49882 / DSM 28221 / CCUG 30454 / Houston 1) (Rochalimaea henselae)).